The primary structure comprises 782 residues: Endonuclease MutS2 (782 aa).

Residue 336-343 (GPNTGGKT) coordinates ATP. One can recognise a Smr domain in the interval 707–782 (LDLRGYRYED…GFGVTVATLK (76 aa)).

Belongs to the DNA mismatch repair MutS family. MutS2 subfamily. As to quaternary structure, homodimer. Binds to stalled ribosomes, contacting rRNA.

Endonuclease that is involved in the suppression of homologous recombination and thus may have a key role in the control of bacterial genetic diversity. Functionally, acts as a ribosome collision sensor, splitting the ribosome into its 2 subunits. Detects stalled/collided 70S ribosomes which it binds and splits by an ATP-hydrolysis driven conformational change. Acts upstream of the ribosome quality control system (RQC), a ribosome-associated complex that mediates the extraction of incompletely synthesized nascent chains from stalled ribosomes and their subsequent degradation. Probably generates substrates for RQC. The polypeptide is Endonuclease MutS2 (Staphylococcus aureus (strain MRSA252)).